We begin with the raw amino-acid sequence, 757 residues long: uncharacterized protein (757 aa).

In terms of domain architecture, S1 motif spans 640 to 709 (GMILEGVVSN…ARKRIALTMR (70 aa)). Residues 711-741 (DDEPGGAKHKMPSENRSRERTAGRKPQRNDR) show a composition bias toward basic and acidic residues. A disordered region spans residues 711 to 757 (DDEPGGAKHKMPSENRSRERTAGRKPQRNDRAPANSAMADAFAKLKR).

This is an uncharacterized protein from Neisseria meningitidis serogroup B (strain ATCC BAA-335 / MC58).